The sequence spans 286 residues: Ribosomal RNA small subunit methyltransferase A (286 aa).

Residues N28, L30, G55, E77, D103, and N123 each coordinate S-adenosyl-L-methionine.

The protein belongs to the class I-like SAM-binding methyltransferase superfamily. rRNA adenine N(6)-methyltransferase family. RsmA subfamily.

The protein resides in the cytoplasm. The enzyme catalyses adenosine(1518)/adenosine(1519) in 16S rRNA + 4 S-adenosyl-L-methionine = N(6)-dimethyladenosine(1518)/N(6)-dimethyladenosine(1519) in 16S rRNA + 4 S-adenosyl-L-homocysteine + 4 H(+). Specifically dimethylates two adjacent adenosines (A1518 and A1519) in the loop of a conserved hairpin near the 3'-end of 16S rRNA in the 30S particle. May play a critical role in biogenesis of 30S subunits. This Bradyrhizobium sp. (strain BTAi1 / ATCC BAA-1182) protein is Ribosomal RNA small subunit methyltransferase A.